The chain runs to 96 residues: Guanyl-specific ribonuclease Sa (96 aa).

A disulfide bridge connects residues cysteine 7 and cysteine 96. The active-site Proton acceptor is the glutamate 54. Histidine 85 serves as the catalytic Proton donor.

It belongs to the ribonuclease N1/T1 family.

The protein localises to the secreted. The enzyme catalyses [RNA] containing guanosine + H2O = an [RNA fragment]-3'-guanosine-3'-phosphate + a 5'-hydroxy-ribonucleotide-3'-[RNA fragment].. The chain is Guanyl-specific ribonuclease Sa (rnaSA) from Kitasatospora aureofaciens (Streptomyces aureofaciens).